The primary structure comprises 338 residues: Large ribosomal subunit protein uL10 (338 aa).

Residues 297 to 338 are disordered; the sequence is PSAQQTQTQQSTAEEKKEEKKEEEKKGPSEEEIGSGLASLFG. Residues 298–308 are compositionally biased toward low complexity; the sequence is SAQQTQTQQST. The segment covering 309 to 325 has biased composition (basic and acidic residues); sequence AEEKKEEKKEEEKKGPS.

It belongs to the universal ribosomal protein uL10 family. In terms of assembly, part of the 50S ribosomal subunit. Forms part of the ribosomal stalk which helps the ribosome interact with GTP-bound translation factors. Forms a heptameric L10(L12)2(L12)2(L12)2 complex, where L10 forms an elongated spine to which the L12 dimers bind in a sequential fashion.

Forms part of the ribosomal stalk, playing a central role in the interaction of the ribosome with GTP-bound translation factors. The sequence is that of Large ribosomal subunit protein uL10 from Saccharolobus islandicus (strain Y.N.15.51 / Yellowstone #2) (Sulfolobus islandicus).